We begin with the raw amino-acid sequence, 21 residues long: Pedibin (21 aa).

Positions 1–21 (AGEDVSHELEEKEKALANHSE) are disordered.

Morphogenetically active peptide. Active in foot development. This chain is Pedibin, found in Hydra vulgaris (Hydra).